The chain runs to 186 residues: ADP-ribosylation factor-like protein 8B (186 aa).

At Met1 the chain carries N-acetylmethionine. An intramembrane region (note=Mediates targeting to membranes) is located at residues 1-19 (MLALISRLLDWFRSLFWKE). GTP is bound by residues 29-35 (QYSGKTT), 71-75 (DIGGQ), and 130-133 (NKRD). A Glycyl lysine isopeptide (Lys-Gly) (interchain with G-Cter in ubiquitin) cross-link involves residue Lys141.

It belongs to the small GTPase superfamily. Arf family. As to quaternary structure, interacts with tubulin. Interacts with BORCS5; recruits ARL8B to lysosomes. Interacts with VPS41; the interaction mediates the recruitment of the HOPS complex to lysosomes. Interacts (GTP-bound form) with PLEKHM2 (via RUN domain); the interaction is required to recruit the motor protein kinesin-1 on lysosomes. Interacts (GTP-bound form) with PLEKHM1 (via RUN domain); the interaction is required for PLEKHM1 localization to lysosomes and for ARL8B function in delivery and degradation of endocytic and autophagic cargo in lysosomes. PLEKHM1 and PLEKHM2 compete for interaction with ARL8B. Interacts (GTP-bound form) with RUFY1; the interaction is required for RUFY1 endosomal location. When GTP-bound, interacts with RUFY3 and RUFY4, but not with RUFY1, nor RUFY2. Ubiquitinated at Lys-141 by RNF167, leading to its degradation. Ubiquitously expressed.

The protein resides in the late endosome membrane. It localises to the lysosome membrane. Its subcellular location is the cytoplasm. It is found in the cytoskeleton. The protein localises to the spindle. The protein resides in the cell projection. It localises to the axon. Its subcellular location is the synapse. It is found in the cytolytic granule membrane. The protein localises to the early endosome membrane. It catalyses the reaction GTP + H2O = GDP + phosphate + H(+). In terms of biological role, small GTPase which cycles between active GTP-bound and inactive GDP-bound states. In its active state, binds to a variety of effector proteins playing a key role in the regulation of lysosomal positioning which is important for nutrient sensing, natural killer cell-mediated cytotoxicity and antigen presentation. Along with its effectors, orchestrates lysosomal transport and fusion. Localizes specifically to lysosomal membranes and mediates anterograde lysosomal motility by recruiting PLEKHM2, which in turn recruits the motor protein kinesin-1 on lysosomes. Required for lysosomal and cytolytic granule exocytosis. Critical factor involved in NK cell-mediated cytotoxicity. Drives the polarization of cytolytic granules and microtubule-organizing centers (MTOCs) toward the immune synapse between effector NK lymphocytes and target cells. In neurons, mediates the anterograde axonal long-range transport of presynaptic lysosome-related vesicles required for presynaptic biogenesis and synaptic function. Also acts as a regulator of endosome to lysosome trafficking pathways of special significance for host defense. Recruits RUFY1 onto early endosomes regulating endosomes to trans-Golgi network proteins retrieval. Regulates cargo trafficking to lysosomes by binding to PLEKHM1 and recruiting the HOPS subunit VPS41, resulting in functional assembly of the HOPS complex on lysosomal membranes. Plays an important role in cargo delivery to lysosomes for antigen presentation and microbial killing. Directs the intersection of CD1d with lipid antigens in lysosomes, and plays a role in intersecting phagosomes with lysosomes to generate phagolysosomes that kill microbes. Involved in the process of MHC II presentation. Regulates the delivery of antigens to lysosomes and the formation of MHC II-peptide complexes through the recruitment of the HOPS complex to lysosomes allowing the fusion of late endosomes to lysosomes. May play a role in chromosome segregation. Its function is as follows. (Microbial infection) During Mycobacterium tuberculosis (Mtb) infection, is required for plasma membrane repair by controlling the exocytosis of lysosomes in macrophages. ARL8B secretion pathway is crucial to control the type of cell death of the M.tuberculosis-infected macrophages, distinguishing avirulent from virulent Mtb induced necrotic cell death. (Microbial infection) During infection, coronaviruses such as SARS-CoV-2 and the chaperone HSPA5/GRP78 are probably co-released through ARL8B-dependent lysosomal exocytic pathway for unconventional egress. The sequence is that of ADP-ribosylation factor-like protein 8B from Homo sapiens (Human).